The following is a 106-amino-acid chain: Iron-sulfur cluster assembly protein CyaY (106 aa).

This sequence belongs to the frataxin family.

In terms of biological role, involved in iron-sulfur (Fe-S) cluster assembly. May act as a regulator of Fe-S biogenesis. The protein is Iron-sulfur cluster assembly protein CyaY of Salmonella dublin (strain CT_02021853).